Reading from the N-terminus, the 140-residue chain is 3-hydroxyacyl-[acyl-carrier-protein] dehydratase FabZ (140 aa).

His-48 is a catalytic residue.

This sequence belongs to the thioester dehydratase family. FabZ subfamily.

It is found in the cytoplasm. The catalysed reaction is a (3R)-hydroxyacyl-[ACP] = a (2E)-enoyl-[ACP] + H2O. In terms of biological role, involved in unsaturated fatty acids biosynthesis. Catalyzes the dehydration of short chain beta-hydroxyacyl-ACPs and long chain saturated and unsaturated beta-hydroxyacyl-ACPs. The protein is 3-hydroxyacyl-[acyl-carrier-protein] dehydratase FabZ of Ligilactobacillus salivarius (strain UCC118) (Lactobacillus salivarius).